The primary structure comprises 662 residues: uncharacterized protein (662 aa).

Helical transmembrane passes span 10-30 (SSIV…GWPV), 46-66 (PVIG…FLPI), 68-88 (AINL…LSKG), 101-121 (GFCW…EIIP), 167-187 (LIYY…TGAT), 193-213 (IALT…LAVA), 217-237 (SAYA…KPAV), 263-283 (PWVP…MAYL), 285-305 (ILYS…AILA), 312-332 (MWAG…LSVS), 342-362 (EVLI…AVLI), 373-393 (KVVE…LDIP), 394-414 (GFWL…FLIW), 432-452 (ALTV…SVIM), 460-480 (VLIP…STTI), and 485-505 (LVGR…ILVG).

Its subcellular location is the cell membrane. This is an uncharacterized protein from Sinorhizobium fredii (strain NBRC 101917 / NGR234).